A 520-amino-acid polypeptide reads, in one-letter code: GMP synthase [glutamine-hydrolyzing] (520 aa).

One can recognise a Glutamine amidotransferase type-1 domain in the interval 9-202 (RVLIVDFGSQ…LFNIAGLKGD (194 aa)). The Nucleophile role is filled by C86. Catalysis depends on residues H176 and E178. The GMPS ATP-PPase domain maps to 203 to 395 (WTMAAFRQEM…LGLAPAFVGR (193 aa)). 230–236 (SGGVDSS) contributes to the ATP binding site.

In terms of assembly, homodimer.

It catalyses the reaction XMP + L-glutamine + ATP + H2O = GMP + L-glutamate + AMP + diphosphate + 2 H(+). Its pathway is purine metabolism; GMP biosynthesis; GMP from XMP (L-Gln route): step 1/1. In terms of biological role, catalyzes the synthesis of GMP from XMP. The sequence is that of GMP synthase [glutamine-hydrolyzing] from Caulobacter vibrioides (strain ATCC 19089 / CIP 103742 / CB 15) (Caulobacter crescentus).